The sequence spans 39 residues: Photosystem II reaction center protein J (39 aa).

Residues 7–27 (IPLWLVATIAGLGVIAVLGLF) traverse the membrane as a helical segment.

Belongs to the PsbJ family. PSII is composed of 1 copy each of membrane proteins PsbA, PsbB, PsbC, PsbD, PsbE, PsbF, PsbH, PsbI, PsbJ, PsbK, PsbL, PsbM, PsbT, PsbX, PsbY, PsbZ, Psb30/Ycf12, peripheral proteins PsbO, CyanoQ (PsbQ), PsbU, PsbV and a large number of cofactors. It forms dimeric complexes.

The protein localises to the cellular thylakoid membrane. One of the components of the core complex of photosystem II (PSII). PSII is a light-driven water:plastoquinone oxidoreductase that uses light energy to abstract electrons from H(2)O, generating O(2) and a proton gradient subsequently used for ATP formation. It consists of a core antenna complex that captures photons, and an electron transfer chain that converts photonic excitation into a charge separation. The protein is Photosystem II reaction center protein J of Microcystis aeruginosa (strain NIES-843 / IAM M-2473).